Here is a 195-residue protein sequence, read N- to C-terminus: ATP-dependent Clp protease proteolytic subunit (195 aa).

Serine 98 serves as the catalytic Nucleophile. Histidine 123 is an active-site residue.

It belongs to the peptidase S14 family. As to quaternary structure, fourteen ClpP subunits assemble into 2 heptameric rings which stack back to back to give a disk-like structure with a central cavity, resembling the structure of eukaryotic proteasomes.

The protein localises to the cytoplasm. It carries out the reaction Hydrolysis of proteins to small peptides in the presence of ATP and magnesium. alpha-casein is the usual test substrate. In the absence of ATP, only oligopeptides shorter than five residues are hydrolyzed (such as succinyl-Leu-Tyr-|-NHMec, and Leu-Tyr-Leu-|-Tyr-Trp, in which cleavage of the -Tyr-|-Leu- and -Tyr-|-Trp bonds also occurs).. In terms of biological role, cleaves peptides in various proteins in a process that requires ATP hydrolysis. Has a chymotrypsin-like activity. Plays a major role in the degradation of misfolded proteins. This chain is ATP-dependent Clp protease proteolytic subunit, found in Alkaliphilus oremlandii (strain OhILAs) (Clostridium oremlandii (strain OhILAs)).